The sequence spans 39 residues: Photosystem II reaction center protein L (39 aa).

Residues 18-38 (SLYLGLLSVFVLGILFSSYFF) form a helical membrane-spanning segment.

Belongs to the PsbL family. In terms of assembly, PSII is composed of 1 copy each of membrane proteins PsbA, PsbB, PsbC, PsbD, PsbE, PsbF, PsbH, PsbI, PsbJ, PsbK, PsbL, PsbM, PsbT, PsbX, PsbY, Psb30/Ycf12, peripheral proteins PsbO, CyanoQ (PsbQ), PsbU, PsbV and a large number of cofactors. It forms dimeric complexes.

The protein resides in the cellular thylakoid membrane. In terms of biological role, one of the components of the core complex of photosystem II (PSII). PSII is a light-driven water:plastoquinone oxidoreductase that uses light energy to abstract electrons from H(2)O, generating O(2) and a proton gradient subsequently used for ATP formation. It consists of a core antenna complex that captures photons, and an electron transfer chain that converts photonic excitation into a charge separation. This subunit is found at the monomer-monomer interface and is required for correct PSII assembly and/or dimerization. This chain is Photosystem II reaction center protein L, found in Prochlorococcus marinus (strain MIT 9301).